The chain runs to 114 residues: MVDQNPKRSGEPPVWLMFGAGGTVSAIFFPVVILIIGLLLPFGLVDAHNLITFAYSWIGKLVILVLTIFPMWCGLHRIHHGMHDLKVHVPAGGFIFYGLATIYTVWVLFAVINL.

3 consecutive transmembrane segments (helical) span residues 24–44 (VSAI…PFGL), 50–70 (LITF…TIFP), and 92–112 (GGFI…FAVI).

It belongs to the FrdD family. As to quaternary structure, part of an enzyme complex containing four subunits: a flavoprotein (FrdA), an iron-sulfur protein (FrdB), and two hydrophobic anchor proteins (FrdC and FrdD).

It localises to the cell inner membrane. Its function is as follows. Anchors the catalytic components of the fumarate reductase complex to the cell membrane, binds quinones. This chain is Fumarate reductase subunit D, found in Haemophilus influenzae (strain PittEE).